The chain runs to 185 residues: Capsid protein (185 aa).

The disordered stretch occupies residues 136-185 (NAPILSTLPETTVVRRRDRGRSPRRRTPSPRRRRSPSPRRRRSQSRESQC). Basic residues predominate over residues 149–178 (VRRRDRGRSPRRRTPSPRRRRSPSPRRRRS). Phosphoserine; by host is present on residues Ser-157, Ser-164, and Ser-172. The 1; half-length repeat unit spans residues 157-163 (SPRRRTP). The 3 X 8 AA repeats of S-P-R-R-R-[PR]-S-Q stretch occupies residues 157–179 (SPRRRTPSPRRRRSPSPRRRRSQ). The Bipartite nuclear localization signal signature appears at 160 to 177 (RRTPSPRRRRSPSPRRRR). 2 tandem repeats follow at residues 164–171 (SPRRRRSP) and 172–179 (SPRRRRSQ). The interval 179-185 (QSRESQC) is RNA binding.

This sequence belongs to the orthohepadnavirus core antigen family. As to quaternary structure, homodimerizes, then multimerizes. Interacts with cytosol exposed regions of viral L glycoprotein present in the reticulum-to-Golgi compartment. Interacts with human FLNB. Phosphorylated form interacts with host importin alpha; this interaction depends on the exposure of the NLS, which itself depends upon genome maturation and/or phosphorylation of the capsid protein. Interacts with host NUP153. In terms of processing, phosphorylated by host SRPK1, SRPK2, and maybe protein kinase C or GAPDH. Phosphorylation is critical for pregenomic RNA packaging. Protein kinase C phosphorylation is stimulated by HBx protein and may play a role in transport of the viral genome to the nucleus at the late step during the viral replication cycle.

The protein localises to the virion. It localises to the host cytoplasm. Self assembles to form an icosahedral capsid. Most capsids appear to be large particles with an icosahedral symmetry of T=4 and consist of 240 copies of capsid protein, though a fraction forms smaller T=3 particles consisting of 180 capsid proteins. Entering capsids are transported along microtubules to the nucleus. Phosphorylation of the capsid is thought to induce exposure of nuclear localization signal in the C-terminal portion of the capsid protein that allows binding to the nuclear pore complex via the importin (karyopherin-) alpha and beta. Capsids are imported in intact form through the nuclear pore into the nuclear basket, where it probably binds NUP153. Only capsids that contain the mature viral genome can release the viral DNA and capsid protein into the nucleoplasm. Immature capsids get stuck in the basket. Capsids encapsulate the pre-genomic RNA and the P protein. Pre-genomic RNA is reverse-transcribed into DNA while the capsid is still in the cytoplasm. The capsid can then either be directed to the nucleus, providing more genomes for transcription, or bud through the endoplasmic reticulum to provide new virions. The polypeptide is Capsid protein (Hepatitis B virus genotype A2 subtype adw2 (strain Rutter 1979) (HBV-A)).